The sequence spans 298 residues: Olfactory receptor 5AK3 (298 aa).

Topologically, residues 1-25 (MGRGNSTEVTEFHLLGFGVQHEFQH) are extracellular. Asn-5 carries N-linked (GlcNAc...) asparagine glycosylation. Residues 26–46 (VLFIVLLLIYVTSLIGNIGMI) traverse the membrane as a helical segment. Over 47–54 (LLIKTDSR) the chain is Cytoplasmic. Residues 55–75 (LQTPMYFFPQHLAFVDICYTS) traverse the membrane as a helical segment. At 76–99 (AITPKMLQSFTEENNLITFRGCVI) the chain is on the extracellular side. The cysteines at positions 97 and 189 are disulfide-linked. Residues 100–120 (QFLVYATFATSDCYLLAIMAM) traverse the membrane as a helical segment. Residues 121–133 (DCYVAICKPLRYP) are Cytoplasmic-facing. The helical transmembrane segment at 134–154 (MIMSQTVYIQLVAGSYIIGSI) threads the bilayer. The N-linked (GlcNAc...) asparagine glycan is linked to Asn-155. Residues 155–196 (NASVHTGFTFSLSFCKSNKINHFFCDGLPILALSCSNIDINI) are Extracellular-facing. The helical transmembrane segment at 197-217 (ILDVVFVGFDLMFTELVIIFS) threads the bilayer. Over 218-237 (YIYIMVTILKMSSTAGRKKS) the chain is Cytoplasmic. A helical membrane pass occupies residues 238 to 258 (FSTCASHLTAVTIFYGTLSYM). Residues 259-271 (YLQPQSNNSQENM) are Extracellular-facing. N-linked (GlcNAc...) asparagine glycosylation occurs at Asn-265. A helical membrane pass occupies residues 272–292 (KVASIFYGTVIPMLNPLIYSL). Residues 293 to 298 (RNKEGK) lie on the Cytoplasmic side of the membrane.

It belongs to the G-protein coupled receptor 1 family.

The protein localises to the cell membrane. Functionally, odorant receptor. This chain is Olfactory receptor 5AK3 (OR5AK3P), found in Homo sapiens (Human).